The primary structure comprises 525 residues: Nucleolar and spindle-associated protein 1-C (525 aa).

4 disordered regions span residues 43–203, 250–293, 373–398, and 452–525; these read FYPE…KKLH, TPVS…FSAA, TPES…EKAK, and LSRP…VPVQ. The segment covering 58–69 has biased composition (polar residues); it reads SSLTDTDELNSS. A compositionally biased stretch (basic residues) spans 82–92; that stretch reads THRRGRGRKPL. A compositionally biased stretch (basic and acidic residues) spans 93 to 102; the sequence is KNHDTPKDEF. Positions 113–127 are enriched in polar residues; that stretch reads SLASETDNTQHQNCL. Residues 160–169 are compositionally biased toward basic and acidic residues; the sequence is TTEKRQKKAS. Over residues 270-285 the composition is skewed to polar residues; sequence PPTTGASPSRTPTNQR. Residues 476-494 show a composition bias toward polar residues; that stretch reads CGSNNNVSVLKNNFKQPHL. Positions 495–514 are enriched in basic and acidic residues; sequence QTREDRRKQHEQDRKGKRDQ.

Belongs to the NUSAP family. As to quaternary structure, interacts with DNA, microtubules, ipo7, kpna2 and kpnb1. Microtubule stabilization is inhibited by ipo7 and kpna2, while microtubule bundling is inhibited by kpnb1. Active GTP-bound ran causes dissociation of ipo7 and kpnb1.

The protein localises to the cytoplasm. Its subcellular location is the nucleus. It is found in the cytoskeleton. It localises to the spindle. Its function is as follows. Microtubule-associated protein with the capacity to bundle and stabilize microtubules. May associate with chromosomes and promote the organization of meiotic or mitotic spindle microtubules around them. This Xenopus laevis (African clawed frog) protein is Nucleolar and spindle-associated protein 1-C (nusap1-c).